The following is a 181-amino-acid chain: Inorganic pyrophosphatase 2 (181 aa).

Substrate is bound by residues lysine 30, arginine 44, and tyrosine 56. 3 residues coordinate Mg(2+): aspartate 66, aspartate 71, and aspartate 103. Residue tyrosine 142 coordinates substrate.

This sequence belongs to the PPase family. As to quaternary structure, homohexamer. Mg(2+) is required as a cofactor.

It localises to the cytoplasm. It carries out the reaction diphosphate + H2O = 2 phosphate + H(+). Functionally, catalyzes the hydrolysis of inorganic pyrophosphate (PPi) forming two phosphate ions. The chain is Inorganic pyrophosphatase 2 from Pseudomonas syringae pv. tomato (strain ATCC BAA-871 / DC3000).